Here is a 269-residue protein sequence, read N- to C-terminus: Energy-coupling factor transporter transmembrane protein EcfT (269 aa).

6 consecutive transmembrane segments (helical) span residues 45–65 (RFFL…RVSL), 75–95 (VLWL…GEAI), 110–130 (MAAL…LLTL), 153–173 (FPAH…PTLL), 202–222 (FVPV…DLAL), and 244–264 (CLED…LLFL).

It belongs to the energy-coupling factor EcfT family. Forms a stable energy-coupling factor (ECF) transporter complex composed of 2 membrane-embedded substrate-binding proteins (S component), 2 ATP-binding proteins (A component) and 2 transmembrane proteins (T component). May be able to interact with more than 1 S component at a time.

It is found in the cell membrane. Transmembrane (T) component of an energy-coupling factor (ECF) ABC-transporter complex. Unlike classic ABC transporters this ECF transporter provides the energy necessary to transport a number of different substrates. The polypeptide is Energy-coupling factor transporter transmembrane protein EcfT (Thermanaerovibrio acidaminovorans (strain ATCC 49978 / DSM 6589 / Su883) (Selenomonas acidaminovorans)).